Consider the following 114-residue polypeptide: UPF0145 protein STK_10800 (114 aa).

This sequence belongs to the UPF0145 family.

This is UPF0145 protein STK_10800 from Sulfurisphaera tokodaii (strain DSM 16993 / JCM 10545 / NBRC 100140 / 7) (Sulfolobus tokodaii).